The primary structure comprises 206 residues: Glutathione peroxidase 1 (206 aa).

Residue S37 is modified to Phosphoserine. U52 is a catalytic residue. Residue U52 is a non-standard amino acid, selenocysteine. N6-acetyllysine; alternate occurs at positions 91, 117, and 151. Residues K91, K117, and K151 each carry the N6-succinyllysine; alternate modification. A phosphoserine mark is found at S200 and S204.

The protein belongs to the glutathione peroxidase family. In terms of assembly, homotetramer. Interacts with MIEN1. In terms of processing, during periods of oxidative stress, Sec-52 may react with a superoxide radical, irreversibly lose hydroselenide and be converted to dehydroalanine.

The protein resides in the cytoplasm. It is found in the mitochondrion. The catalysed reaction is 2 glutathione + H2O2 = glutathione disulfide + 2 H2O. The enzyme catalyses a hydroperoxy polyunsaturated fatty acid + 2 glutathione = a hydroxy polyunsaturated fatty acid + glutathione disulfide + H2O. It catalyses the reaction tert-butyl hydroperoxide + 2 glutathione = tert-butanol + glutathione disulfide + H2O. It carries out the reaction cumene hydroperoxide + 2 glutathione = 2-phenylpropan-2-ol + glutathione disulfide + H2O. The catalysed reaction is (13S)-hydroperoxy-(9Z,11E)-octadecadienoate + 2 glutathione = (13S)-hydroxy-(9Z,11E)-octadecadienoate + glutathione disulfide + H2O. The enzyme catalyses (9S)-hydroperoxy-(10E,12Z)-octadecadienoate + 2 glutathione = (9S)-hydroxy-(10E,12Z)-octadecadienoate + glutathione disulfide + H2O. It catalyses the reaction (5S)-hydroperoxy-(6E,8Z,11Z,14Z)-eicosatetraenoate + 2 glutathione = (5S)-hydroxy-(6E,8Z,11Z,14Z)-eicosatetraenoate + glutathione disulfide + H2O. It carries out the reaction (12S)-hydroperoxy-(5Z,8Z,10E,14Z)-eicosatetraenoate + 2 glutathione = (12S)-hydroxy-(5Z,8Z,10E,14Z)-eicosatetraenoate + glutathione disulfide + H2O. The catalysed reaction is (12R)-hydroperoxy-(5Z,8Z,10E,14Z)-eicosatetraenoate + 2 glutathione = (12R)-hydroxy-(5Z,8Z,10E,14Z)-eicosatetraenoate + glutathione disulfide + H2O. The enzyme catalyses (15S)-hydroperoxy-(5Z,8Z,11Z,13E)-eicosatetraenoate + 2 glutathione = (15S)-hydroxy-(5Z,8Z,11Z,13E)-eicosatetraenoate + glutathione disulfide + H2O. It catalyses the reaction (5S)-hydroperoxy-(6E,8Z,11Z,14Z,17Z)-eicosapentaenoate + 2 glutathione = (5S)-hydroxy-(6E,8Z,11Z,14Z,17Z)-eicosapentaenoate + glutathione disulfide + H2O. It carries out the reaction (12S)-hydroperoxy-(5Z,8Z,10E,14Z,17Z)-eicosapentaenoate + 2 glutathione = (12S)-hydroxy-(5Z,8Z,10E,14Z,17Z)-eicosapentaenoate + glutathione disulfide + H2O. The catalysed reaction is (15S)-hydroperoxy-(5Z,8Z,11Z,13E,17Z)-eicosapentaenoate + 2 glutathione = (15S)-hydroxy-(5Z,8Z,11Z,13E,17Z)-eicosapentaenoate + glutathione disulfide + H2O. The enzyme catalyses (15S)-hydroperoxy-(11Z,13E)-eicosadienoate + 2 glutathione = (15S)-hydroxy-(11Z,13E)-eicosadienoate + glutathione disulfide + H2O. It catalyses the reaction (17S)-hydroperoxy-(4Z,7Z,10Z,13Z,15E,19Z)-docosahexaenoate + 2 glutathione = (17S)-hydroxy-(4Z,7Z,10Z,13Z,15E,19Z)-docosahexaenoate + glutathione disulfide + H2O. Functionally, catalyzes the reduction of hydroperoxides in a glutathione-dependent manner thus regulating cellular redox homeostasis. Can reduce small soluble hydroperoxides such as H2O2, cumene hydroperoxide and tert-butyl hydroperoxide, as well as several fatty acid-derived hydroperoxides. In platelets catalyzes the reduction of 12-hydroperoxyeicosatetraenoic acid, the primary product of the arachidonate 12-lipoxygenase pathway. This Sus scrofa (Pig) protein is Glutathione peroxidase 1 (GPX1).